The chain runs to 440 residues: Na(+)/H(+) antiporter NhaA (440 aa).

11 helical membrane-spanning segments follow: residues 25-45 (FLHI…VALV), 76-96 (LHHV…GLEV), 112-132 (TLPI…YLSM), 141-161 (GWGI…AILG), 170-190 (VLLL…IAIG), 194-214 (SLDG…HFLS), 225-245 (VIVG…ATLI), 312-332 (HPWT…GVLI), 345-365 (VVIG…WLVI), 378-398 (WPIL…ALFI), and 414-434 (GVLV…LWTL).

Belongs to the NhaA Na(+)/H(+) (TC 2.A.33) antiporter family.

The protein resides in the cell inner membrane. The catalysed reaction is Na(+)(in) + 2 H(+)(out) = Na(+)(out) + 2 H(+)(in). Its function is as follows. Na(+)/H(+) antiporter that extrudes sodium in exchange for external protons. The chain is Na(+)/H(+) antiporter NhaA from Rhodopirellula baltica (strain DSM 10527 / NCIMB 13988 / SH1).